An 87-amino-acid polypeptide reads, in one-letter code: MAEEDIETKIKNYKTAPFDSRFPNQNQTRNCWQNYLDFHRCQKAMTTKGGNVSVCEWYQRVYQSLCPTSWVTDWDEQRAEGTFPGKI.

A CHCH domain is found at 28 to 74 (TRNCWQNYLDFHRCQKAMTTKGGNVSVCEWYQRVYQSLCPTSWVTDW). A Cx9C motif motif is present at residues 31 to 41 (CWQNYLDFHRC). Intrachain disulfides connect Cys-31/Cys-66 and Cys-41/Cys-55. Residues 55–66 (CEWYQRVYQSLC) carry the Cx10C motif motif.

It localises to the mitochondrion intermembrane space. In terms of biological role, connects the two COX monomers into the physiological dimeric form. This chain is Cytochrome c oxidase subunit 6B1 (COX6B1), found in Macaca fascicularis (Crab-eating macaque).